Reading from the N-terminus, the 380-residue chain is Cytochrome b (380 aa).

4 consecutive transmembrane segments (helical) span residues phenylalanine 33–methionine 53, tryptophan 77–valine 98, tryptophan 113–leucine 133, and phenylalanine 178–leucine 198. Residues histidine 83 and histidine 97 each coordinate heme b. Positions 182 and 196 each coordinate heme b. Histidine 201 provides a ligand contact to a ubiquinone. Helical transmembrane passes span tyrosine 226–serine 246, leucine 288–histidine 308, leucine 320–glycine 340, and phenylalanine 347–proline 367.

This sequence belongs to the cytochrome b family. In terms of assembly, the cytochrome bc1 complex contains 3 respiratory subunits (MT-CYB, CYC1 and UQCRFS1), 2 core proteins (UQCRC1 and UQCRC2) and probably 6 low-molecular weight proteins. Requires heme b as cofactor.

The protein localises to the mitochondrion inner membrane. Its function is as follows. Component of the ubiquinol-cytochrome c reductase complex (complex III or cytochrome b-c1 complex) that is part of the mitochondrial respiratory chain. The b-c1 complex mediates electron transfer from ubiquinol to cytochrome c. Contributes to the generation of a proton gradient across the mitochondrial membrane that is then used for ATP synthesis. The sequence is that of Cytochrome b (mt-cyb) from Allocyttus niger (Black oreo dory).